Consider the following 245-residue polypeptide: Actin-like protein 10 (245 aa).

This sequence belongs to the actin family.

The protein is Actin-like protein 10 (ACTL10) of Homo sapiens (Human).